The sequence spans 244 residues: MLLLGAVLLLLALPGHDQETTTQGPGVLLPLPKGACTGWMAGIPGHPGHNGAPGRDGRDGTPGEKGEKGDPGLIGPKGDIGETGVPGAEGPRGFPGIQGRKGEPGEGAYVYRSAFSVGLETYVTIPNMPIRFTKIFYNQQNHYDGSTGKFHCNIPGLYYFAYHITVYMKDVKVSLFKKDKAMLFTYDQYQENNVDQASGSVLLHLEVGDQVWLQVYGEGERNGLYADNDNDSTFTGFLLYHDTN.

The N-terminal stretch at 1–18 is a signal peptide; that stretch reads MLLLGAVLLLLALPGHDQ. Thr-21 and Thr-22 each carry an O-linked (GalNAc...) threonine glycan. At Lys-33 the chain carries 5-hydroxylysine. Cys-36 carries the post-translational modification S-(2-succinyl)cysteine. A disordered region spans residues 40-101; that stretch reads MAGIPGHPGH…RGFPGIQGRK (62 aa). Residues 42–107 form the Collagen-like domain; it reads GIPGHPGHNG…QGRKGEPGEG (66 aa). 4-hydroxyproline occurs at positions 44, 47, and 53. A compositionally biased stretch (basic and acidic residues) spans 55–70; the sequence is RDGRDGTPGEKGEKGD. 2 positions are modified to 5-hydroxylysine: Lys-65 and Lys-68. 2 O-linked (Gal...) hydroxylysine; partial glycosylation sites follow: Lys-65 and Lys-68. 2 positions are modified to 4-hydroxyproline; partial: Pro-71 and Pro-76. 5-hydroxylysine is present on Lys-77. O-linked (Gal...) hydroxylysine; partial glycosylation is present at Lys-77. Pro-91 carries the post-translational modification 4-hydroxyproline. Pro-95 bears the 4-hydroxyproline; partial mark. Lys-101 is subject to 5-hydroxylysine. An O-linked (Gal...) hydroxylysine; partial glycan is attached at Lys-101. The C1q domain maps to 108–244; it reads AYVYRSAFSV…TGFLLYHDTN (137 aa).

Homomultimer. Forms trimers, hexamers and 12- to 18-mers. The trimers (low molecular weight complexes / LMW) are assembled via non-covalent interactions of the collagen-like domains in a triple helix and hydrophobic interactions within the globular C1q domain. Several trimers can associate to form disulfide-linked hexamers (middle molecular weight complexes / MMW) and larger complexes (higher molecular weight / HMW). The HMW-complex assembly is also modulated by the degree of lysine hydroxylation and glycosylation. LMW, MMW and HMW complexes bind to HBEGF, MMW and HMW complexes bind to PDGFB, and HMW complex binds to FGF2. Interacts with CTRP9 via the C1q domain (heterotrimeric complex). In terms of processing, HMW complexes are more extensively glycosylated than smaller oligomers. Hydroxylation and glycosylation of the lysine residues within the collagen-like domain of adiponectin seem to be critically involved in regulating the formation and/or secretion of HMW complexes and consequently contribute to the insulin-sensitizing activity of adiponectin in hepatocytes. Post-translationally, O-glycosylated. Not N-glycosylated. O-linked glycans on hydroxylysines consist of Glc-Gal disaccharides bound to the oxygen atom of post-translationally added hydroxyl groups. Sialylated to varying degrees depending on tissue. Thr-22 appears to be the major site of sialylation. Higher sialylation found in SGBS adipocytes than in HEK fibroblasts. Sialylation is not required neither for heterodimerization nor for secretion. Not sialylated on the glycosylated hydroxylysines. Desialylated forms are rapidly cleared from the circulation. Succination of Cys-36 by the Krebs cycle intermediate fumarate, which leads to S-(2-succinyl)cysteine residues, inhibits polymerization and secretion of adiponectin. Adiponectin is a major target for succination in both adipocytes and adipose tissue of diabetic mammals. It was proposed that succination of proteins is a biomarker of mitochondrial stress and accumulation of Krebs cycle intermediates in adipose tissue in diabetes and that succination of adiponectin may contribute to the decrease in plasma adiponectin in diabetes. In terms of tissue distribution, synthesized exclusively by adipocytes and secreted into plasma.

The protein resides in the secreted. With respect to regulation, polymerization and secretion of adiponectin is inhibited by succination of cysteine residues by the Krebs cycle intermediate fumarate, which leads to S-(2-succinyl)cysteine residues. Functionally, important adipokine involved in the control of fat metabolism and insulin sensitivity, with direct anti-diabetic, anti-atherogenic and anti-inflammatory activities. Stimulates AMPK phosphorylation and activation in the liver and the skeletal muscle, enhancing glucose utilization and fatty-acid combustion. Antagonizes TNF-alpha by negatively regulating its expression in various tissues such as liver and macrophages, and also by counteracting its effects. Inhibits endothelial NF-kappa-B signaling through a cAMP-dependent pathway. May play a role in cell growth, angiogenesis and tissue remodeling by binding and sequestering various growth factors with distinct binding affinities, depending on the type of complex, LMW, MMW or HMW. This is Adiponectin (ADIPOQ) from Homo sapiens (Human).